Here is a 143-residue protein sequence, read N- to C-terminus: Large ribosomal subunit protein uL15 (143 aa).

Residues 1–48 are disordered; it reads MRLNTISPSKGAKHSSKRLGRGIGSGLGKTSGRGHKGQKARSGCSIHR. A compositionally biased stretch (basic residues) spans 11-20; the sequence is GAKHSSKRLG. A compositionally biased stretch (gly residues) spans 21–31; sequence RGIGSGLGKTS.

The protein belongs to the universal ribosomal protein uL15 family. Part of the 50S ribosomal subunit.

Binds to the 23S rRNA. The polypeptide is Large ribosomal subunit protein uL15 (Baumannia cicadellinicola subsp. Homalodisca coagulata).